The following is a 669-amino-acid chain: MIMTMMQTVRAWQQESDVEHRKQHKQRWRPDGAHISAAYDLNSDNDDGHHRVVHNQNNGSPNSSPNQSTSAFRQRQPHHPPTGQQPPRLPCTVTHFSAHWKTLLILLTLLSASTLTASANVTSTISPPINGSSTDYILLYGESTTSLVPALTTGLSGDGSGAVIEDEEDAEKASEYIFDRTDVRIIFITLYTLVFCCCFFGNLLVILVVTLSRRLRSITNFFLANLAFADFCVGLFCVMQNLSIYLIESWVFGEFLCRMYQFVHSLSYTASIFILVVICMERYFAIVHPITCKQILTAARLRMVIVTVWITSAVYSTPKFVFSKTIKNIHTQDGQEEEICVLDREMFNSKLLDMINFVLLYVMPLLVMTVLYSKIAIALWRSSRGLTPHVVQHQHQQPQQPSCQDIGMGMHNSMYHHHPHHHHHHHQHHQLQSAASSAGVVGVGLGGGGGGGPGPSLASGGSSTTSLSRKQSSKYEKRGVSITESQLDNCKVSLEADRPIVSACRKTSFYHHGHAHHQRAGNASVGGGSGGAGAGATHMSHSSSNVLRARRGVVRMLIIFVLTFALCNLPYHARKMWQYWSRSYRGDSNFNALLTPLTFLVTYFNSGVNPLLYAFLSRNFRKGMKELLLCSWKKGKGKSSSNSSMHHKRKALQTHSLPTDTTHIGNEQL.

The span at 1–15 shows a compositional bias: polar residues; it reads MIMTMMQTVRAWQQE. Residues 1–90 form a disordered region; sequence MIMTMMQTVR…PTGQQPPRLP (90 aa). Over 1–184 the chain is Extracellular; that stretch reads MIMTMMQTVR…EYIFDRTDVR (184 aa). Residues 55 to 74 show a composition bias toward low complexity; it reads NQNNGSPNSSPNQSTSAFRQ. N-linked (GlcNAc...) asparagine glycosylation occurs at asparagine 66. Residues 79 to 89 show a composition bias toward pro residues; sequence HPPTGQQPPRL. N-linked (GlcNAc...) asparagine glycans are attached at residues asparagine 120 and asparagine 130. A helical transmembrane segment spans residues 185–205; sequence IIFITLYTLVFCCCFFGNLLV. At 206–217 the chain is on the cytoplasmic side; that stretch reads ILVVTLSRRLRS. A helical transmembrane segment spans residues 218–238; sequence ITNFFLANLAFADFCVGLFCV. At 239–269 the chain is on the extracellular side; that stretch reads MQNLSIYLIESWVFGEFLCRMYQFVHSLSYT. N-linked (GlcNAc...) asparagine glycosylation occurs at asparagine 241. Cysteine 257 and cysteine 340 are oxidised to a cystine. A helical membrane pass occupies residues 270–290; sequence ASIFILVVICMERYFAIVHPI. At 291 to 302 the chain is on the cytoplasmic side; sequence TCKQILTAARLR. Residues 303–323 form a helical membrane-spanning segment; it reads MVIVTVWITSAVYSTPKFVFS. At 324 to 350 the chain is on the extracellular side; that stretch reads KTIKNIHTQDGQEEEICVLDREMFNSK. Residues 351–371 traverse the membrane as a helical segment; sequence LLDMINFVLLYVMPLLVMTVL. The Cytoplasmic portion of the chain corresponds to 372 to 552; sequence YSKIAIALWR…SSNVLRARRG (181 aa). A compositionally biased stretch (low complexity) spans 390 to 401; the sequence is VVQHQHQQPQQP. Disordered stretches follow at residues 390 to 481 and 515 to 537; these read VVQH…RGVS and AHHQ…AGAT. The segment covering 414 to 429 has biased composition (basic residues); it reads MYHHHPHHHHHHHQHH. Residues 441–454 are compositionally biased toward gly residues; it reads VGVGLGGGGGGGPG. Residues 455 to 470 show a composition bias toward low complexity; it reads PSLASGGSSTTSLSRK. Residues 524–534 show a composition bias toward gly residues; that stretch reads SVGGGSGGAGA. The helical transmembrane segment at 553–573 threads the bilayer; sequence VVRMLIIFVLTFALCNLPYHA. Over 574-595 the chain is Extracellular; that stretch reads RKMWQYWSRSYRGDSNFNALLT. The chain crosses the membrane as a helical span at residues 596-616; sequence PLTFLVTYFNSGVNPLLYAFL. Residues 617–669 lie on the Cytoplasmic side of the membrane; that stretch reads SRNFRKGMKELLLCSWKKGKGKSSSNSSMHHKRKALQTHSLPTDTTHIGNEQL. The disordered stretch occupies residues 635–669; it reads GKGKSSSNSSMHHKRKALQTHSLPTDTTHIGNEQL. Over residues 653 to 669 the composition is skewed to polar residues; the sequence is QTHSLPTDTTHIGNEQL.

The protein belongs to the G-protein coupled receptor 1 family.

It localises to the cell membrane. Its function is as follows. G-protein coupled receptor which is activated by the Trissin peptide in vitro, leading to increased intracellular calcium ion levels. This Drosophila melanogaster (Fruit fly) protein is Trissin receptor.